Here is a 73-residue protein sequence, read N- to C-terminus: uncharacterized protein (73 aa).

Residues 37-57 (AIIITVAVVAFGALTLGAIGA) traverse the membrane as a helical segment.

It is found in the membrane. This is an uncharacterized protein from Natronomonas pharaonis (strain ATCC 35678 / DSM 2160 / CIP 103997 / JCM 8858 / NBRC 14720 / NCIMB 2260 / Gabara) (Halobacterium pharaonis).